The primary structure comprises 22 residues: Chymotrypsin inhibitor (22 aa).

Residues 1-22 (FDESFGFQGPSTYEKTPLGEPA) form a disordered region.

In terms of tissue distribution, hemolymph.

It is found in the secreted. It localises to the extracellular space. Inhibits chymotrypsin stoichiometrically. Also inhibits porcine pancreatic elastase and trypsin. This Mythimna unipuncta (Armyworm moth) protein is Chymotrypsin inhibitor.